The primary structure comprises 326 residues: tRNA-modifying protein YgfZ (326 aa).

The folate site is built by Trp27 and Trp189.

This sequence belongs to the tRNA-modifying YgfZ family.

It is found in the cytoplasm. Functionally, folate-binding protein involved in regulating the level of ATP-DnaA and in the modification of some tRNAs. It is probably a key factor in regulatory networks that act via tRNA modification, such as initiation of chromosomal replication. The protein is tRNA-modifying protein YgfZ of Escherichia coli O45:K1 (strain S88 / ExPEC).